The primary structure comprises 336 residues: N6-methyladenosine RNA methyltransferase MTA1 (336 aa).

Residues 61 to 83 (LISSEPPHLPFKTPEPKAGSGGL) form a disordered region.

The protein belongs to the MT-A70-like family.

It carries out the reaction an adenosine in mRNA + S-adenosyl-L-methionine = an N(6)-methyladenosine in mRNA + S-adenosyl-L-homocysteine + H(+). In terms of biological role, N6-methyladenosine RNA methyltransferase that plays a crucial role in fungal phenotypic traits, virulence, and stress tolerance. Mediates the methylation of mRNAs to produce N6-methyladenosine (m6A)-containing mRNAs. M6A is a modification present at internal sites of mRNAs and some non-coding RNAs and plays a role in mRNA stability and processing. Mediates specifically acid phosphatase APHA mRNA stability through a YTHDF1-dependent m6A modification of the A1306, A1341, and A1666 key methylation modification sites. Also mediates the stability of the transcription factor ZAP1 mRNA via modification of residue A1935 localized in the 3'UTR. In Cryphonectria parasitica (strain ATCC 38755 / EP155), this protein is N6-methyladenosine RNA methyltransferase MTA1.